The sequence spans 207 residues: MSSRVFVRSLAAAAKAGVKPPIQLFGLEGTYASALFTAASKTTSIESAGKALASLSKTIAKDAKLGAILANPALPAGDRTVVVQTLAQKTPGMDAAVQNLMQVLAENNRLNLLQGVAGEFTKLTDAHNGLVQATVTTAQPLEGKLFRRVEKALAQSSFIGAGKTLKLENVVKPEIQGGLIVEVADRTVDLSIASRISKLNQVLKESI.

The protein belongs to the ATPase delta chain family. In terms of assembly, F-type ATPases have 2 components, CF(1) - the catalytic core - and CF(0) - the membrane proton channel. CF(1) has five subunits: alpha(3), beta(3), gamma(1), delta(1), epsilon(1). CF(0) has three main subunits: a, b and c.

It localises to the mitochondrion. It is found in the mitochondrion inner membrane. Its function is as follows. Mitochondrial membrane ATP synthase (F(1)F(0) ATP synthase or Complex V) produces ATP from ADP in the presence of a proton gradient across the membrane which is generated by electron transport complexes of the respiratory chain. F-type ATPases consist of two structural domains, F(1) - containing the extramembraneous catalytic core and F(0) - containing the membrane proton channel, linked together by a central stalk and a peripheral stalk. During catalysis, ATP synthesis in the catalytic domain of F(1) is coupled via a rotary mechanism of the central stalk subunits to proton translocation. Part of the complex F(0) domain and the peripheric stalk, which acts as a stator to hold the catalytic alpha(3)beta(3) subcomplex and subunit a/ATP6 static relative to the rotary elements. The sequence is that of ATP synthase subunit 5, mitochondrial (ATP5) from Eremothecium gossypii (strain ATCC 10895 / CBS 109.51 / FGSC 9923 / NRRL Y-1056) (Yeast).